The chain runs to 774 residues: Vezatin (774 aa).

2 consecutive transmembrane segments (helical) span residues 138-158 and 163-183; these read IATP…AVAA and SISS…FTVL. Residues 430 to 457 adopt a coiled-coil conformation; sequence VRSLQLHLKALLNEVIVLEDELDKLSSC. Acidic residues predominate over residues 746 to 757; sequence FGDEWDDDDDNE. The tract at residues 746–774 is disordered; sequence FGDEWDDDDDNEDHDHDKERNNDSSQLEG. The segment covering 758 to 767 has biased composition (basic and acidic residues); that stretch reads DHDHDKERNN.

This sequence belongs to the vezatin family. In terms of assembly, interacts with myosin VIIa and the cadherin-catenins complex.

It is found in the cell membrane. The protein resides in the cell junction. The protein localises to the adherens junction. It localises to the nucleus. Its function is as follows. Plays a pivotal role in the establishment of adherens junctions and their maintenance in adult life. In Xenopus laevis (African clawed frog), this protein is Vezatin (vezt).